Reading from the N-terminus, the 98-residue chain is uncharacterized protein (98 aa).

2 consecutive transmembrane segments (helical) span residues 13–33 (LFSL…IAIF) and 65–85 (IMVI…IFIS).

It is found in the membrane. This is an uncharacterized protein from Saccharomyces cerevisiae (strain ATCC 204508 / S288c) (Baker's yeast).